A 238-amino-acid chain; its full sequence is Flagellar L-ring protein (238 aa).

A signal peptide spans 1–16 (MNKAILAVAMVLLLAG). Cys-17 carries N-palmitoyl cysteine lipidation. A lipid anchor (S-diacylglycerol cysteine) is attached at Cys-17.

This sequence belongs to the FlgH family. The basal body constitutes a major portion of the flagellar organelle and consists of four rings (L,P,S, and M) mounted on a central rod.

It localises to the cell outer membrane. It is found in the bacterial flagellum basal body. Its function is as follows. Assembles around the rod to form the L-ring and probably protects the motor/basal body from shearing forces during rotation. This is Flagellar L-ring protein from Brucella abortus (strain 2308).